Consider the following 207-residue polypeptide: Redox-sensing transcriptional repressor Rex (207 aa).

A DNA-binding region (H-T-H motif) is located at residues 17 to 56; that stretch reads IYLRYLSYLQQVEVTTVSSQQMGKNLDVNPAQIRKDLAAF. 91 to 96 lines the NAD(+) pocket; that stretch reads GAGHLG.

Belongs to the transcriptional regulatory Rex family. As to quaternary structure, homodimer.

It localises to the cytoplasm. Modulates transcription in response to changes in cellular NADH/NAD(+) redox state. In Brevibacillus brevis (strain 47 / JCM 6285 / NBRC 100599), this protein is Redox-sensing transcriptional repressor Rex.